The chain runs to 455 residues: Proline--tRNA ligase (455 aa).

Positions 101, 103, and 132 each coordinate L-proline. Arg-132, Glu-134, Gln-216, and Thr-219 together coordinate ATP. His-221 is a binding site for L-proline. 2 residues coordinate ATP: Ser-253 and Arg-255. Positions 329 to 359 (EIKGVPLRIEVGPKDIENKKITLFRRDTMEK) are interaction with tRNA.

This sequence belongs to the class-II aminoacyl-tRNA synthetase family. ProS type 3 subfamily. As to quaternary structure, homodimer. The dimer is functionally asymmetric: only one of the two active sites at a time is able to form prolyl-adenylate, and only one tRNA molecule binds per dimer.

The protein localises to the cytoplasm. It catalyses the reaction tRNA(Pro) + L-proline + ATP = L-prolyl-tRNA(Pro) + AMP + diphosphate. Inhibited by high concentrations of prolinamide. Its function is as follows. Catalyzes the attachment of proline to tRNA(Pro) in a two-step reaction: proline is first activated by ATP to form Pro-AMP and then transferred to the acceptor end of tRNA(Pro). Can inadvertently accommodate and process non-cognate amino acids such as cysteine and alanine. This is Proline--tRNA ligase (proS) from Methanocaldococcus jannaschii (strain ATCC 43067 / DSM 2661 / JAL-1 / JCM 10045 / NBRC 100440) (Methanococcus jannaschii).